A 244-amino-acid chain; its full sequence is HTH-type transcriptional regulator RdgA (244 aa).

Residues 9–62 enclose the HTH cro/C1-type domain; the sequence is LKTARTAQGLSQKALGDMIGVSQAAIQKIEVGKASQTTKIVELSNNLRVRPEWL. A DNA-binding region (H-T-H motif) is located at residues 20 to 39; the sequence is QKALGDMIGVSQAAIQKIEV.

Functionally, regulates pectin lyase production in response to DNA damage. This chain is HTH-type transcriptional regulator RdgA (rdgA), found in Pectobacterium carotovorum subsp. carotovorum (Erwinia carotovora subsp. carotovora).